The primary structure comprises 117 residues: MAENNLAKIQFYEGTDEPVVPEIRLTRGNDGTTGQAIFIFEKPQALSSVADGEITGMRMIDAEGEILTREVKVKFVDGEPMFLEGTYIWKTKSDFDRFMRFANSYAKSNGLGYSEKK.

Belongs to the Psb28 family. As to quaternary structure, part of the photosystem II complex.

The protein localises to the cellular thylakoid membrane. The protein is Photosystem II reaction center Psb28 protein of Prochlorococcus marinus subsp. pastoris (strain CCMP1986 / NIES-2087 / MED4).